We begin with the raw amino-acid sequence, 185 residues long: MAEAAYTPRLRAEYDAKIRTAMTEKFGYENVMQVPRLDKVVLNMGVGDSVNDRKKAETAAAELTQIAGQKAIVTYSRIAIATFKLRENQPIGCKVTLRKARMYEFIDRLVTVALPRVRDFRGLNPKSFDGRGNYSLGIKEHIIFPEIDFDKVTEARGMDITVCTTAKTDEEARALLTAFNFPFRQ.

Belongs to the universal ribosomal protein uL5 family. In terms of assembly, part of the 50S ribosomal subunit; part of the 5S rRNA/L5/L18/L25 subcomplex. Contacts the 5S rRNA and the P site tRNA. Forms a bridge to the 30S subunit in the 70S ribosome.

Its function is as follows. This is one of the proteins that bind and probably mediate the attachment of the 5S RNA into the large ribosomal subunit, where it forms part of the central protuberance. In the 70S ribosome it contacts protein S13 of the 30S subunit (bridge B1b), connecting the 2 subunits; this bridge is implicated in subunit movement. Contacts the P site tRNA; the 5S rRNA and some of its associated proteins might help stabilize positioning of ribosome-bound tRNAs. The sequence is that of Large ribosomal subunit protein uL5 from Bradyrhizobium diazoefficiens (strain JCM 10833 / BCRC 13528 / IAM 13628 / NBRC 14792 / USDA 110).